The sequence spans 682 residues: DNA-directed RNA polymerase subunit beta' (682 aa).

Cys69, Cys71, Cys87, and Cys90 together coordinate Zn(2+). Asp489, Asp491, and Asp493 together coordinate Mg(2+).

The protein belongs to the RNA polymerase beta' chain family. RpoC1 subfamily. As to quaternary structure, in plastids the minimal PEP RNA polymerase catalytic core is composed of four subunits: alpha, beta, beta', and beta''. When a (nuclear-encoded) sigma factor is associated with the core the holoenzyme is formed, which can initiate transcription. Mg(2+) is required as a cofactor. It depends on Zn(2+) as a cofactor.

The protein resides in the plastid. The protein localises to the chloroplast. It catalyses the reaction RNA(n) + a ribonucleoside 5'-triphosphate = RNA(n+1) + diphosphate. DNA-dependent RNA polymerase catalyzes the transcription of DNA into RNA using the four ribonucleoside triphosphates as substrates. The protein is DNA-directed RNA polymerase subunit beta' of Vitis vinifera (Grape).